The chain runs to 92 residues: Small ribosomal subunit protein uS19 (92 aa).

Belongs to the universal ribosomal protein uS19 family.

Its function is as follows. Protein S19 forms a complex with S13 that binds strongly to the 16S ribosomal RNA. In Bartonella bacilliformis (strain ATCC 35685 / KC583 / Herrer 020/F12,63), this protein is Small ribosomal subunit protein uS19.